We begin with the raw amino-acid sequence, 1118 residues long: Ubiquitin carboxyl-terminal hydrolase 8 (1118 aa).

The 84-residue stretch at T33–A116 folds into the MIT domain. 2 stretches are compositionally biased toward basic and acidic residues: residues K120–G146 and L158–T177. Positions K120–T177 are disordered. Position 160 is a phosphoserine (S160). One can recognise a Rhodanese domain in the interval K195–T313. 2 positions are modified to phosphoserine: S392 and S400. The interval K402 to K447 is disordered. The SH3-binding motif lies at P405–P413. The segment covering L417–N429 has biased composition (basic and acidic residues). S452 carries the post-translational modification Phosphoserine. The span at K475–K573 shows a compositional bias: basic and acidic residues. Disordered regions lie at residues K475–V648 and Y679–P746. Position 577 is a phosphothreonine (T577). The segment covering T618–G645 has biased composition (basic and acidic residues). Residues S716–I726 show a composition bias toward polar residues. Residues S718 and S719 each carry the phosphoserine modification. One can recognise a USP domain in the interval T777–L1109. C786 (nucleophile) is an active-site residue. A Phosphothreonine modification is found at T945. H1067 (proton acceptor) is an active-site residue.

The protein belongs to the peptidase C19 family. In terms of assembly, forms a ternary complex with RNF128 and OTUB1. Interacts (via C-terminal UCH catalytic domain) with OTUB1 isoform 1. Interacts with STAM2 (via SH3 domain). Interacts with DNAJB3, EGFR, EPS15, RASGRF1, RNF41, YWHAE, YWHAG and YWHAZ. Interacts with NBR1, RASGRF1, RNF41 and IST1. Associates with the ESCRT-0 complex and with microtubules. Interacts with BIRC6/bruce and KIF23/MKLP1. As to quaternary structure, (Microbial infection) Interacts with Zika virus non-structural protein 1. Post-translationally, phosphorylation of Ser-718 is essential for interaction with YWHAE and for cytosol localization. Undergoes dephosphorylation at Ser-718 in the M phase. Tyrosine-phosphorylated in its N-terminal half in an EGFR-dependent manner. Ubiquitinated. Inactive form is mostly monoubiquitinated, but polyubiquitination happens too. Ubiquitination is increased in EGF-stimulated cells. Ubiquitination of active form is undetectable, suggesting a possibility that USP8 deubiquitinates itself, thereby regulating its own function.

The protein localises to the cytoplasm. Its subcellular location is the nucleus. It localises to the endosome membrane. It is found in the cell membrane. It carries out the reaction Thiol-dependent hydrolysis of ester, thioester, amide, peptide and isopeptide bonds formed by the C-terminal Gly of ubiquitin (a 76-residue protein attached to proteins as an intracellular targeting signal).. Functionally, hydrolase that can remove conjugated ubiquitin from proteins and therefore plays an important regulatory role at the level of protein turnover by preventing degradation. Converts both 'Lys-48' an 'Lys-63'-linked ubiquitin chains. Catalytic activity is enhanced in the M phase. Involved in cell proliferation. Required to enter into S phase in response to serum stimulation. May regulate T-cell anergy mediated by RNF128 via the formation of a complex containing RNF128 and OTUB1. Probably regulates the stability of STAM2 and RASGRF1. Regulates endosomal ubiquitin dynamics, cargo sorting, membrane traffic at early endosomes, and maintenance of ESCRT-0 stability. The level of protein ubiquitination on endosomes is essential for maintaining the morphology of the organelle. Deubiquitinates EPS15 and controls tyrosine kinase stability. Removes conjugated ubiquitin from EGFR thus regulating EGFR degradation and downstream MAPK signaling. Involved in acrosome biogenesis through interaction with the spermatid ESCRT-0 complex and microtubules. Deubiquitinates BIRC6/bruce and KIF23/MKLP1. Deubiquitinates BACE1 which inhibits BACE1 lysosomal degradation and modulates BACE-mediated APP cleavage and amyloid-beta formation. This is Ubiquitin carboxyl-terminal hydrolase 8 from Homo sapiens (Human).